Reading from the N-terminus, the 109-residue chain is Fluoride-specific ion channel FluC 1 (109 aa).

Helical transmembrane passes span 21–41, 52–72, and 84–104; these read LFIN…GFFI, IILS…YFLY, and IIFC…GFWI.

Belongs to the fluoride channel Fluc/FEX (TC 1.A.43) family.

The protein resides in the cell inner membrane. It carries out the reaction fluoride(in) = fluoride(out). In terms of biological role, fluoride-specific ion channel. Important for reducing fluoride concentration in the cell, thus reducing its toxicity. The protein is Fluoride-specific ion channel FluC 1 of Prochlorococcus marinus (strain MIT 9312).